Reading from the N-terminus, the 443-residue chain is Probable glycine dehydrogenase (decarboxylating) subunit 1 (443 aa).

It belongs to the GcvP family. N-terminal subunit subfamily. In terms of assembly, the glycine cleavage system is composed of four proteins: P, T, L and H. In this organism, the P 'protein' is a heterodimer of two subunits.

It catalyses the reaction N(6)-[(R)-lipoyl]-L-lysyl-[glycine-cleavage complex H protein] + glycine + H(+) = N(6)-[(R)-S(8)-aminomethyldihydrolipoyl]-L-lysyl-[glycine-cleavage complex H protein] + CO2. Functionally, the glycine cleavage system catalyzes the degradation of glycine. The P protein binds the alpha-amino group of glycine through its pyridoxal phosphate cofactor; CO(2) is released and the remaining methylamine moiety is then transferred to the lipoamide cofactor of the H protein. The polypeptide is Probable glycine dehydrogenase (decarboxylating) subunit 1 (Chloroherpeton thalassium (strain ATCC 35110 / GB-78)).